The primary structure comprises 23 residues: M-myrmeciitoxin-Mp2b (23 aa).

Glutamine 23 bears the Glutamine amide mark.

This sequence belongs to the formicidae venom precursor-01 superfamily. Ant pilosulin family. In terms of assembly, heterodimer with M-MIITX-Mp2a (pilosulin-3a) (AC Q26464); disulfide-linked. Only heterodimers (and not monomers) have been identified in the venom. As to expression, expressed by the venom gland.

The protein localises to the secreted. Functionally, heterodimer protein that may serve both defensive (pain-inducing) and predatory (insecticidal) roles. Has membrane-disrupting activity and shows induction of non-specific calcium influx into cells,. Shows broad-spectrum activity against a diverse range of bacteria, and cell lines, as well as hemolytic activity (EC(50)=2.18 uM). In vivo, shows moderate insecticidal activity against D.melanogaster and potent anthelmintic activity against the veterinary nematode H.contortus. In addition, intraplantar injection into mice induces nocifensive behavior and mechanical allodynia. The sequence is that of M-myrmeciitoxin-Mp2b from Myrmecia pilosula (Jack jumper ant).